The primary structure comprises 172 residues: Protein LHCP TRANSLOCATION DEFECT (172 aa).

Residues 1–28 constitute a chloroplast transit peptide; sequence MASIPCTFQLSARASSASAAAAARRSPR. One copy of the ANK repeat lies at 114–146; sequence PVDILLMLAASEGDKPKLEELLRAGAKYDVKDV.

Its subcellular location is the plastid. It is found in the chloroplast. In terms of biological role, involved in the import of light-harvesting complex proteins (LHCP) and subsequent routing of these proteins to the chloroplast signal recognition particle (SRP) pathway. In Oryza sativa subsp. indica (Rice), this protein is Protein LHCP TRANSLOCATION DEFECT (LTD).